The chain runs to 255 residues: tRNA (guanine-N(7)-)-methyltransferase (255 aa).

Residues 1 to 21 (MMHDDPNEAGLPPHDDAIPDE) form a disordered region. Residues Glu86, Glu111, Asp138, and Asp161 each contribute to the S-adenosyl-L-methionine site. Residue Asp161 is part of the active site. Residues Lys165, Asp197, and 232–235 (TKFE) contribute to the substrate site.

This sequence belongs to the class I-like SAM-binding methyltransferase superfamily. TrmB family.

It catalyses the reaction guanosine(46) in tRNA + S-adenosyl-L-methionine = N(7)-methylguanosine(46) in tRNA + S-adenosyl-L-homocysteine. Its pathway is tRNA modification; N(7)-methylguanine-tRNA biosynthesis. Its function is as follows. Catalyzes the formation of N(7)-methylguanine at position 46 (m7G46) in tRNA. This chain is tRNA (guanine-N(7)-)-methyltransferase, found in Burkholderia lata (strain ATCC 17760 / DSM 23089 / LMG 22485 / NCIMB 9086 / R18194 / 383).